Here is a 361-residue protein sequence, read N- to C-terminus: Peptide chain release factor 1 (361 aa).

Q236 is subject to N5-methylglutamine.

Belongs to the prokaryotic/mitochondrial release factor family. Post-translationally, methylated by PrmC. Methylation increases the termination efficiency of RF1.

Its subcellular location is the cytoplasm. Its function is as follows. Peptide chain release factor 1 directs the termination of translation in response to the peptide chain termination codons UAG and UAA. The protein is Peptide chain release factor 1 of Levilactobacillus brevis (strain ATCC 367 / BCRC 12310 / CIP 105137 / JCM 1170 / LMG 11437 / NCIMB 947 / NCTC 947) (Lactobacillus brevis).